The sequence spans 380 residues: ATP phosphoribosyltransferase regulatory subunit (380 aa).

It belongs to the class-II aminoacyl-tRNA synthetase family. HisZ subfamily. In terms of assembly, heteromultimer composed of HisG and HisZ subunits.

Its subcellular location is the cytoplasm. The protein operates within amino-acid biosynthesis; L-histidine biosynthesis; L-histidine from 5-phospho-alpha-D-ribose 1-diphosphate: step 1/9. Required for the first step of histidine biosynthesis. May allow the feedback regulation of ATP phosphoribosyltransferase activity by histidine. The chain is ATP phosphoribosyltransferase regulatory subunit from Thermoanaerobacter pseudethanolicus (strain ATCC 33223 / 39E) (Clostridium thermohydrosulfuricum).